The chain runs to 136 residues: uncharacterized protein (136 aa).

The protein resides in the mitochondrion. This is an uncharacterized protein from Marchantia polymorpha (Common liverwort).